We begin with the raw amino-acid sequence, 156 residues long: MSFLTLKGNKMIIENQKDAEFSSAFKPSQLAQASRFKRWLASMINGLVLWVMAGLGFALGDFAGVVGMIVYAGFQLYFMKTYGQTMAKRWLGLRVFNYHTNQPVEFGKYIGREIIDILLAWTSFLLIISGIVALVRDDRRSLTDLVAGTIVLKDEK.

Transmembrane regions (helical) follow at residues 46-66 and 114-134; these read GLVLWVMAGLGFALGDFAGVV and IIDILLAWTSFLLIISGIVAL.

The protein resides in the cell membrane. This is an uncharacterized protein from Haemophilus influenzae (strain ATCC 51907 / DSM 11121 / KW20 / Rd).